The primary structure comprises 392 residues: Aminomethyltransferase, mitochondrial (392 aa).

Residues 1 to 16 constitute a mitochondrion transit peptide; sequence MLRAGCRAALARRHLS. Substrate is bound by residues Glu221, Arg250, and Tyr388.

The protein belongs to the GcvT family. In terms of assembly, the glycine cleavage system is composed of four proteins: P, T, L and H.

It is found in the mitochondrion. The catalysed reaction is N(6)-[(R)-S(8)-aminomethyldihydrolipoyl]-L-lysyl-[protein] + (6S)-5,6,7,8-tetrahydrofolate = N(6)-[(R)-dihydrolipoyl]-L-lysyl-[protein] + (6R)-5,10-methylene-5,6,7,8-tetrahydrofolate + NH4(+). Its function is as follows. The glycine cleavage system catalyzes the degradation of glycine. This Gallus gallus (Chicken) protein is Aminomethyltransferase, mitochondrial.